A 384-amino-acid chain; its full sequence is Alkanesulfonate monooxygenase (384 aa).

This sequence belongs to the SsuD family.

It catalyses the reaction an alkanesulfonate + FMNH2 + O2 = an aldehyde + FMN + sulfite + H2O + 2 H(+). Its function is as follows. Catalyzes the desulfonation of aliphatic sulfonates. This chain is Alkanesulfonate monooxygenase, found in Burkholderia thailandensis (strain ATCC 700388 / DSM 13276 / CCUG 48851 / CIP 106301 / E264).